Consider the following 330-residue polypeptide: Protein RecA (330 aa).

G66–T73 is an ATP binding site.

This sequence belongs to the RecA family.

It localises to the cytoplasm. Functionally, can catalyze the hydrolysis of ATP in the presence of single-stranded DNA, the ATP-dependent uptake of single-stranded DNA by duplex DNA, and the ATP-dependent hybridization of homologous single-stranded DNAs. It interacts with LexA causing its activation and leading to its autocatalytic cleavage. The chain is Protein RecA from Bacteroides thetaiotaomicron (strain ATCC 29148 / DSM 2079 / JCM 5827 / CCUG 10774 / NCTC 10582 / VPI-5482 / E50).